The following is a 234-amino-acid chain: Rhodanese-like domain-containing protein 9, chloroplastic (234 aa).

Residues M1 to A47 constitute a chloroplast transit peptide. In terms of domain architecture, Rhodanese spans A62–G185. Residue C145 is the Cysteine persulfide intermediate of the active site. Residues I204–F222 traverse the membrane as a helical segment.

It is found in the plastid. The protein resides in the chloroplast. The protein localises to the membrane. The protein is Rhodanese-like domain-containing protein 9, chloroplastic (STR9) of Arabidopsis thaliana (Mouse-ear cress).